Consider the following 406-residue polypeptide: Arginine biosynthesis bifunctional protein ArgJ (406 aa).

Positions 154, 180, 191, 278, 401, and 406 each coordinate substrate. The active-site Nucleophile is the T191.

It belongs to the ArgJ family. As to quaternary structure, heterotetramer of two alpha and two beta chains.

It localises to the cytoplasm. The catalysed reaction is N(2)-acetyl-L-ornithine + L-glutamate = N-acetyl-L-glutamate + L-ornithine. It catalyses the reaction L-glutamate + acetyl-CoA = N-acetyl-L-glutamate + CoA + H(+). The protein operates within amino-acid biosynthesis; L-arginine biosynthesis; L-ornithine and N-acetyl-L-glutamate from L-glutamate and N(2)-acetyl-L-ornithine (cyclic): step 1/1. It functions in the pathway amino-acid biosynthesis; L-arginine biosynthesis; N(2)-acetyl-L-ornithine from L-glutamate: step 1/4. Catalyzes two activities which are involved in the cyclic version of arginine biosynthesis: the synthesis of N-acetylglutamate from glutamate and acetyl-CoA as the acetyl donor, and of ornithine by transacetylation between N(2)-acetylornithine and glutamate. The polypeptide is Arginine biosynthesis bifunctional protein ArgJ (Gloeobacter violaceus (strain ATCC 29082 / PCC 7421)).